The following is a 578-amino-acid chain: Arginine--tRNA ligase (578 aa).

Residues 127–137 (PNLAKEMHVGH) carry the 'HIGH' region motif.

It belongs to the class-I aminoacyl-tRNA synthetase family. As to quaternary structure, monomer.

The protein resides in the cytoplasm. It catalyses the reaction tRNA(Arg) + L-arginine + ATP = L-arginyl-tRNA(Arg) + AMP + diphosphate. This Pseudomonas fluorescens (strain Pf0-1) protein is Arginine--tRNA ligase.